The chain runs to 76 residues: DNA-directed RNA polymerase subunit epsilon (76 aa).

Belongs to the RNA polymerase subunit epsilon family. As to quaternary structure, RNAP is composed of a core of 2 alpha, a beta and a beta' subunit. The core is associated with a delta subunit, and at least one of epsilon or omega. When a sigma factor is associated with the core the holoenzyme is formed, which can initiate transcription.

It catalyses the reaction RNA(n) + a ribonucleoside 5'-triphosphate = RNA(n+1) + diphosphate. A non-essential component of RNA polymerase (RNAP). In Streptococcus mutans serotype c (strain ATCC 700610 / UA159), this protein is DNA-directed RNA polymerase subunit epsilon.